The following is a 200-amino-acid chain: UPF0316 protein SAUSA300_1892 (200 aa).

The next 3 membrane-spanning stretches (helical) occupy residues 8–28 (PWLM…FLTM), 40–60 (IAAS…GLVM), and 66–86 (IQNI…GMKI).

This sequence belongs to the UPF0316 family.

It localises to the cell membrane. In Staphylococcus aureus (strain USA300), this protein is UPF0316 protein SAUSA300_1892.